The sequence spans 550 residues: Dihydroxy-acid dehydratase (550 aa).

Residue D78 coordinates Mg(2+). C119 contributes to the [2Fe-2S] cluster binding site. D120 and K121 together coordinate Mg(2+). N6-carboxylysine is present on K121. Position 191 (C191) interacts with [2Fe-2S] cluster. E440 is a binding site for Mg(2+). The active-site Proton acceptor is the S466.

The protein belongs to the IlvD/Edd family. In terms of assembly, homodimer. [2Fe-2S] cluster is required as a cofactor. It depends on Mg(2+) as a cofactor.

It carries out the reaction (2R)-2,3-dihydroxy-3-methylbutanoate = 3-methyl-2-oxobutanoate + H2O. It catalyses the reaction (2R,3R)-2,3-dihydroxy-3-methylpentanoate = (S)-3-methyl-2-oxopentanoate + H2O. It functions in the pathway amino-acid biosynthesis; L-isoleucine biosynthesis; L-isoleucine from 2-oxobutanoate: step 3/4. The protein operates within amino-acid biosynthesis; L-valine biosynthesis; L-valine from pyruvate: step 3/4. Its function is as follows. Functions in the biosynthesis of branched-chain amino acids. Catalyzes the dehydration of (2R,3R)-2,3-dihydroxy-3-methylpentanoate (2,3-dihydroxy-3-methylvalerate) into 2-oxo-3-methylpentanoate (2-oxo-3-methylvalerate) and of (2R)-2,3-dihydroxy-3-methylbutanoate (2,3-dihydroxyisovalerate) into 2-oxo-3-methylbutanoate (2-oxoisovalerate), the penultimate precursor to L-isoleucine and L-valine, respectively. The polypeptide is Dihydroxy-acid dehydratase (Methanococcus maripaludis (strain DSM 14266 / JCM 13030 / NBRC 101832 / S2 / LL)).